An 81-amino-acid polypeptide reads, in one-letter code: Short neurotoxin 1 (81 aa).

An N-terminal signal peptide occupies residues 1-21; it reads MKTLLLTLVVVTIVCLDLGYT. 4 disulfides stabilise this stretch: cysteine 24-cysteine 43, cysteine 38-cysteine 60, cysteine 62-cysteine 73, and cysteine 74-cysteine 79.

This sequence belongs to the three-finger toxin family. Short-chain subfamily. Type I alpha-neurotoxin sub-subfamily. Expressed by the venom gland.

The protein localises to the secreted. Binds to muscle nicotinic acetylcholine receptor (nAChR) and inhibit acetylcholine from binding to the receptor, thereby impairing neuromuscular transmission. The sequence is that of Short neurotoxin 1 from Hoplocephalus stephensii (Stephens's banded snake).